Here is a 226-residue protein sequence, read N- to C-terminus: Fibronectin type III domain-containing protein 9 (226 aa).

Residues 1–101 form the Fibronectin type-III domain; it reads MNIEVGNVSH…FHTLDKSPLA (101 aa). A helical membrane pass occupies residues 113–133; that stretch reads LWVLMAILLACFTAVLAFICL.

It is found in the membrane. This chain is Fibronectin type III domain-containing protein 9 (Fndc9), found in Mus musculus (Mouse).